A 241-amino-acid polypeptide reads, in one-letter code: Agamous-like MADS-box protein AGL9 homolog (241 aa).

Residues 3-57 (RGRVELKRIENKINRQVTFAKRRNGLLKKAYELSVLCDAEVALIIFSNRGKLYEF) form the MADS-box domain. Positions 89 to 179 (EISSQQEYLK…KQRLMEGSTL (91 aa)) constitute a K-box domain.

The protein resides in the nucleus. Probable transcription factor. The sequence is that of Agamous-like MADS-box protein AGL9 homolog (FBP2) from Petunia hybrida (Petunia).